The chain runs to 366 residues: MFLSRPELIKKEIFDIAEYVPGKSIEEIASAYGLDPASIIKLGSNENPLGPSPKAVQAMMDTAPFANIYPSADAIELREALSRYTGFPVSNLIASGPGMDGLLDGLCRLVIEKGDEVIVPTPTFAYYELPARACGGKPVFVRRSQDFSIDPEKLLEATSSRTKIIFLCSPNNPSGNLLPEKDLRKVLENTRALVFVDEAYVEFADRNLAELVREYDNLVVGRTFSKVFGLAGLRLGYGIMPEWLAKEYIRAATPFSVSLPALKAGIAALSDVEHRKKSIEIAREGRKYLKEKIPFKVYPSQANFVLVDVSPLKAKAVTQSLMKKGIIVRSCDSFRDAGDTLIRATAGTLEQNEKVVRAFETAKKEV.

Lysine 226 carries the N6-(pyridoxal phosphate)lysine modification.

This sequence belongs to the class-II pyridoxal-phosphate-dependent aminotransferase family. Histidinol-phosphate aminotransferase subfamily. Pyridoxal 5'-phosphate serves as cofactor.

The enzyme catalyses L-histidinol phosphate + 2-oxoglutarate = 3-(imidazol-4-yl)-2-oxopropyl phosphate + L-glutamate. The protein operates within amino-acid biosynthesis; L-histidine biosynthesis; L-histidine from 5-phospho-alpha-D-ribose 1-diphosphate: step 7/9. The chain is Histidinol-phosphate aminotransferase from Methanosarcina barkeri (strain Fusaro / DSM 804).